The sequence spans 803 residues: Isoamylase 1, chloroplastic (803 aa).

Residues 1–54 (MASLPHCLSARPLVVAAAPGRPGPGPGPWLRGGARRRNAAFSAGNAGRRVGLRR) constitute a chloroplast transit peptide. The Nucleophile role is filled by Asp-432. The active-site Proton donor is Glu-488.

The protein belongs to the glycosyl hydrolase 13 family. Forms a homo-pentamer and a hetero-hexamer composed of five ISA1 and one ISA2. Interacts with FLO6/SIP4. In terms of tissue distribution, highly expressed in developing endosperm. Expressed at low levels in leaves.

The protein resides in the plastid. Its subcellular location is the chloroplast. It catalyses the reaction Hydrolysis of (1-&gt;6)-alpha-D-glucosidic branch linkages in glycogen, amylopectin and their beta-limit dextrins.. It participates in glycan biosynthesis; starch biosynthesis. Its activity is regulated as follows. Inhibited by copper chloride, mercury chloride, ammonium molybdate and para-chloromercuribenzoate. Functionally, starch-debranching enzyme involved in amylopectin biosynthesis in endosperm. Functions by removing excess branches or improper branches that interfere with the formation of double helices of the cluster chains of amylopectin and crystallization of starch. Works as ISA1 homooligomer or together with ISA2 as heterooligomer. The heterooligomer ISA1 and ISA2 possesses higher affinity than the ISA1 homooligomer for various branched polyglucans in vitro, but no marked differences exist in chain preferences for debranching of amylopectin and phytoglycogen between these forms. The chain is Isoamylase 1, chloroplastic from Oryza sativa subsp. japonica (Rice).